The chain runs to 505 residues: Catalase (505 aa).

Residues 1-25 (MSKQDGKLTGLFGAPVSDRENSMTA) are disordered. Residues His56 and Asn129 contribute to the active site. Tyr339 provides a ligand contact to heme.

It belongs to the catalase family. Homodimer. Heme serves as cofactor.

It catalyses the reaction 2 H2O2 = O2 + 2 H2O. Functionally, decomposes hydrogen peroxide into water and oxygen; serves to protect cells from the toxic effects of hydrogen peroxide. The chain is Catalase (katA) from Staphylococcus warneri.